The chain runs to 85 residues: Coiled-coil-helix-coiled-coil-helix domain-containing protein 7 (85 aa).

A CHCH domain is found at 13-55 (SNPCLEETDASTKCMDDNRYEKDLCTPYFVKYKNCRKFWNGIM). Short sequence motifs (cx9C motif) lie at residues 16 to 26 (CLEETDASTKC) and 37 to 47 (CTPYFVKYKNC). Disulfide bonds link cysteine 16–cysteine 47 and cysteine 26–cysteine 37.

The protein belongs to the CHCHD7 family.

The protein resides in the mitochondrion intermembrane space. This chain is Coiled-coil-helix-coiled-coil-helix domain-containing protein 7 (chchd7), found in Xenopus tropicalis (Western clawed frog).